A 201-amino-acid chain; its full sequence is Ependymin-related protein 2 (201 aa).

An N-terminal signal peptide occupies residues 1-21 (MILQVVLLLACLSGAIVSTGA). N-linked (GlcNAc...) asparagine glycans are attached at residues Asn-38 and Asn-137. A Microbody targeting signal motif is present at residues 199 to 201 (CRA).

The protein belongs to the ependymin family. As to expression, component of the acid-soluble and acid-insoluble organic matrix of calcified shell layers (at protein level).

The protein localises to the secreted. In Haliotis asinina (Donkey's ear abalone), this protein is Ependymin-related protein 2.